Reading from the N-terminus, the 482-residue chain is ATP synthase subunit beta, chloroplastic (482 aa).

Gly168–Thr175 contributes to the ATP binding site.

This sequence belongs to the ATPase alpha/beta chains family. F-type ATPases have 2 components, CF(1) - the catalytic core - and CF(0) - the membrane proton channel. CF(1) has five subunits: alpha(3), beta(3), gamma(1), delta(1), epsilon(1). CF(0) has four main subunits: a(1), b(1), b'(1) and c(9-12).

The protein localises to the plastid. Its subcellular location is the chloroplast thylakoid membrane. It carries out the reaction ATP + H2O + 4 H(+)(in) = ADP + phosphate + 5 H(+)(out). Functionally, produces ATP from ADP in the presence of a proton gradient across the membrane. The catalytic sites are hosted primarily by the beta subunits. The sequence is that of ATP synthase subunit beta, chloroplastic from Gnetum parvifolium (Small-leaved jointfir).